A 137-amino-acid chain; its full sequence is ATP synthase epsilon chain, chloroplastic (137 aa).

The protein belongs to the ATPase epsilon chain family. F-type ATPases have 2 components, CF(1) - the catalytic core - and CF(0) - the membrane proton channel. CF(1) has five subunits: alpha(3), beta(3), gamma(1), delta(1), epsilon(1). CF(0) has three main subunits: a, b and c.

Its subcellular location is the plastid. It localises to the chloroplast thylakoid membrane. In terms of biological role, produces ATP from ADP in the presence of a proton gradient across the membrane. The polypeptide is ATP synthase epsilon chain, chloroplastic (Oryza nivara (Indian wild rice)).